The following is a 107-amino-acid chain: Putative double-stranded DNA mimic protein Spro_2690 (107 aa).

This sequence belongs to the putative dsDNA mimic protein family.

In terms of biological role, may act as a double-stranded DNA (dsDNA) mimic. Probably regulates the activity of a dsDNA-binding protein. The sequence is that of Putative double-stranded DNA mimic protein Spro_2690 from Serratia proteamaculans (strain 568).